The sequence spans 415 residues: Phosphoglycerate kinase (415 aa).

Val-22, Asp-23, Phe-24, Asn-25, Gln-37, Arg-38, Ser-61, His-62, Gly-64, Arg-65, Arg-121, His-168, and Arg-169 together coordinate (2R)-3-phosphoglycerate. Gly-212 contacts ADP. Residue Gly-212 coordinates CDP. AMP contacts are provided by Ala-213 and Lys-214. Ala-213 lines the ATP pocket. Ala-213 lines the Mg(2+) pocket. Ala-216 and Asp-217 together coordinate Mg(2+). Asp-217 contacts CDP. Residue Lys-218 coordinates AMP. Lys-218 lines the ATP pocket. Gly-236 lines the ADP pocket. Gly-236 is a binding site for CDP. Residues Gly-237 and Gly-311 each coordinate AMP. ATP-binding residues include Gly-237 and Gly-311. The CDP site is built by Gly-336 and Phe-341. Residue Phe-341 coordinates ADP. An AMP-binding site is contributed by Glu-342. ATP-binding residues include Glu-342, Asp-373, and Thr-374. Asp-373 contributes to the Mg(2+) binding site.

Belongs to the phosphoglycerate kinase family. In terms of assembly, monomer. The cofactor is Mg(2+).

The protein resides in the cytoplasm. The enzyme catalyses (2R)-3-phosphoglycerate + ATP = (2R)-3-phospho-glyceroyl phosphate + ADP. The protein operates within carbohydrate degradation; glycolysis; pyruvate from D-glyceraldehyde 3-phosphate: step 2/5. In terms of biological role, enzyme of the glycolytic pathway. Glycolysis is essential in glial cells but not in neurons; neurons rely on the citric acid cycle for their energy needs, and on lactate and alanine secreted into the hemolymph by glial cells to fuel it. This is Phosphoglycerate kinase from Drosophila melanogaster (Fruit fly).